A 67-amino-acid chain; its full sequence is ATP synthase F(0) complex subunit 8 (67 aa).

A helical transmembrane segment spans residues 8–24 (TWLIMISSMILTLFITF). Lys-54 bears the N6-acetyllysine; alternate mark. Lys-54 carries the post-translational modification N6-succinyllysine; alternate. An N6-acetyllysine modification is found at Lys-57.

The protein belongs to the ATPase protein 8 family. Component of the ATP synthase complex composed at least of ATP5F1A/subunit alpha, ATP5F1B/subunit beta, ATP5MC1/subunit c (homooctomer), MT-ATP6/subunit a, MT-ATP8/subunit 8, ATP5ME/subunit e, ATP5MF/subunit f, ATP5MG/subunit g, ATP5MK/subunit k, ATP5MJ/subunit j, ATP5F1C/subunit gamma, ATP5F1D/subunit delta, ATP5F1E/subunit epsilon, ATP5PF/subunit F6, ATP5PB/subunit b, ATP5PD/subunit d, ATP5PO/subunit OSCP. ATP synthase complex consists of a soluble F(1) head domain (subunits alpha(3) and beta(3)) - the catalytic core - and a membrane F(0) domain - the membrane proton channel (subunits c, a, 8, e, f, g, k and j). These two domains are linked by a central stalk (subunits gamma, delta, and epsilon) rotating inside the F1 region and a stationary peripheral stalk (subunits F6, b, d, and OSCP). Interacts with PRICKLE3.

It is found in the mitochondrion membrane. Subunit 8, of the mitochondrial membrane ATP synthase complex (F(1)F(0) ATP synthase or Complex V) that produces ATP from ADP in the presence of a proton gradient across the membrane which is generated by electron transport complexes of the respiratory chain. ATP synthase complex consist of a soluble F(1) head domain - the catalytic core - and a membrane F(1) domain - the membrane proton channel. These two domains are linked by a central stalk rotating inside the F(1) region and a stationary peripheral stalk. During catalysis, ATP synthesis in the catalytic domain of F(1) is coupled via a rotary mechanism of the central stalk subunits to proton translocation. In vivo, can only synthesize ATP although its ATP hydrolase activity can be activated artificially in vitro. Part of the complex F(0) domain. In Halichoerus grypus (Gray seal), this protein is ATP synthase F(0) complex subunit 8.